A 183-amino-acid polypeptide reads, in one-letter code: Glutathione-regulated potassium-efflux system ancillary protein KefG (183 aa).

It belongs to the NAD(P)H dehydrogenase (quinone) family. KefG subfamily. Interacts with KefB.

The protein localises to the cell inner membrane. It catalyses the reaction a quinone + NADH + H(+) = a quinol + NAD(+). It carries out the reaction a quinone + NADPH + H(+) = a quinol + NADP(+). In terms of biological role, regulatory subunit of a potassium efflux system that confers protection against electrophiles. Required for full activity of KefB. In Salmonella paratyphi B (strain ATCC BAA-1250 / SPB7), this protein is Glutathione-regulated potassium-efflux system ancillary protein KefG.